Here is a 571-residue protein sequence, read N- to C-terminus: Proline--tRNA ligase (571 aa).

Belongs to the class-II aminoacyl-tRNA synthetase family. ProS type 1 subfamily. As to quaternary structure, homodimer.

The protein resides in the cytoplasm. The catalysed reaction is tRNA(Pro) + L-proline + ATP = L-prolyl-tRNA(Pro) + AMP + diphosphate. In terms of biological role, catalyzes the attachment of proline to tRNA(Pro) in a two-step reaction: proline is first activated by ATP to form Pro-AMP and then transferred to the acceptor end of tRNA(Pro). As ProRS can inadvertently accommodate and process non-cognate amino acids such as alanine and cysteine, to avoid such errors it has two additional distinct editing activities against alanine. One activity is designated as 'pretransfer' editing and involves the tRNA(Pro)-independent hydrolysis of activated Ala-AMP. The other activity is designated 'posttransfer' editing and involves deacylation of mischarged Ala-tRNA(Pro). The misacylated Cys-tRNA(Pro) is not edited by ProRS. In Pseudomonas fluorescens (strain Pf0-1), this protein is Proline--tRNA ligase.